We begin with the raw amino-acid sequence, 138 residues long: Small ribosomal subunit protein uS11c (138 aa).

The segment at 1–24 (MIKPIPRISSRRNGRIGSRKTGRR) is disordered. Basic residues predominate over residues 9–24 (SSRRNGRIGSRKTGRR).

The protein belongs to the universal ribosomal protein uS11 family. As to quaternary structure, part of the 30S ribosomal subunit.

It localises to the plastid. Its subcellular location is the chloroplast. This chain is Small ribosomal subunit protein uS11c, found in Lemna minor (Common duckweed).